Consider the following 606-residue polypeptide: NADH-ubiquinone oxidoreductase chain 5 (606 aa).

The next 15 helical transmembrane spans lie at 3–23, 38–58, 87–107, 124–144, 180–200, 216–236, 244–264, 276–296, 304–323, 328–350, 369–389, 404–424, 460–480, 483–503, and 586–606; these read VINL…LPIT, ITKM…LLFL, FFSL…MEFS, LLLF…LQLF, IGDM…NSWE, LLGL…HPWL, TPVS…FTLI, IQTS…ICAL, IIAL…IGIN, AFTH…GSII, MPIT…MPFL, MSYI…MTAS, LILG…PHTT, MTMP…GFTV, and LMKL…LITL.

The protein belongs to the complex I subunit 5 family. In terms of assembly, core subunit of respiratory chain NADH dehydrogenase (Complex I) which is composed of 45 different subunits.

It is found in the mitochondrion inner membrane. It carries out the reaction a ubiquinone + NADH + 5 H(+)(in) = a ubiquinol + NAD(+) + 4 H(+)(out). Its function is as follows. Core subunit of the mitochondrial membrane respiratory chain NADH dehydrogenase (Complex I) which catalyzes electron transfer from NADH through the respiratory chain, using ubiquinone as an electron acceptor. Essential for the catalytic activity and assembly of complex I. This chain is NADH-ubiquinone oxidoreductase chain 5 (MT-ND5), found in Elephas maximus (Indian elephant).